The following is a 168-amino-acid chain: DAZ-associated protein 2 (168 aa).

Residues 1–13 (MNSKGQYPTQPTY) show a composition bias toward low complexity. The disordered stretch occupies residues 1–25 (MNSKGQYPTQPTYPVQPPGNPVYPQ). The PPAY signature appears at 39–42 (PPAY). S77 is modified (phosphoserine).

In terms of assembly, interacts with SOX6. Interacts with DAZ1 and DAZL. Interacts with IL17RB. May interact with FAM168B. Interacts with INCA1. Interacts with EIF4G1 and EIF4G2. Interacts (via PPAY motif) with NEDD4 (via WW domains). Interacts with transcription factor TCF4; the interaction results in localization of DAZAP2 to the nucleus. Interacts with transcription factors TCF7 and TCF7L1. Interacts with transcription factor LEF1. Interacts with serine/threonine-protein kinase HIPK2; the interaction results in phosphorylation of DAZAP2 which causes localization of DAZAP2 to the nucleus, reduces interaction of DAZAP2 with HIPK2 and prevents DAZAP2-dependent degradation of HIPK2. Interacts with ubiquitin ligase SIAH1; the interaction is decreased following phosphorylation of DAZAP2 by HIPK2. Interacts with TP53; the interaction is triggered by DNA damage. In terms of processing, ubiquitinated by SMURF2, leading to proteasomal degradation. Ubiquitinated by NEDD4, leading to proteasomal degradation. Post-translationally, following DNA damage, phosphorylated by HIPK2 which promotes DAZAP2 localization to the nucleus, reduces interaction of DAZAP2 with HIPK2 and SIAH1, and prevents DAZAP2-dependent ubiquitination of HIPK2 by E3 ubiquitin-protein ligase SIAH1 and subsequent HIPK2 proteasomal degradation.

It is found in the cytoplasm. It localises to the nucleus. Its subcellular location is the nucleus speckle. The protein localises to the nuclear body. The protein resides in the stress granule. Functionally, in unstressed cells, promotes SIAH1-mediated polyubiquitination and degradation of the serine/threonine-protein kinase HIPK2, probably by acting as a loading factor that potentiates complex formation between HIPK2 and ubiquitin ligase SIAH1. In response to DNA damage, localizes to the nucleus following phosphorylation by HIPK2 and modulates the expression of a subset of TP53/p53 target genes by binding to TP53 at target gene promoters. This limits the expression of a number of cell death-mediating TP53 target genes, reducing DNA damage-induced cell death. Enhances the binding of transcription factor TCF7L2/TCF4, a Wnt signaling pathway effector, to the promoters of target genes. Plays a role in stress granule formation. In Bos taurus (Bovine), this protein is DAZ-associated protein 2.